Consider the following 427-residue polypeptide: 3-phosphoshikimate 1-carboxyvinyltransferase (427 aa).

3-phosphoshikimate-binding residues include Lys-22, Ser-23, and Arg-27. Lys-22 serves as a coordination point for phosphoenolpyruvate. Residues Gly-96 and Arg-124 each coordinate phosphoenolpyruvate. The 3-phosphoshikimate site is built by Ser-169, Ser-170, Gln-171, Ser-197, Asp-313, Asn-336, and Lys-340. Gln-171 is a phosphoenolpyruvate binding site. The active-site Proton acceptor is the Asp-313. Residues Arg-344, Arg-386, and Lys-411 each coordinate phosphoenolpyruvate.

This sequence belongs to the EPSP synthase family. As to quaternary structure, monomer.

It is found in the cytoplasm. The catalysed reaction is 3-phosphoshikimate + phosphoenolpyruvate = 5-O-(1-carboxyvinyl)-3-phosphoshikimate + phosphate. It functions in the pathway metabolic intermediate biosynthesis; chorismate biosynthesis; chorismate from D-erythrose 4-phosphate and phosphoenolpyruvate: step 6/7. Functionally, catalyzes the transfer of the enolpyruvyl moiety of phosphoenolpyruvate (PEP) to the 5-hydroxyl of shikimate-3-phosphate (S3P) to produce enolpyruvyl shikimate-3-phosphate and inorganic phosphate. This Citrobacter koseri (strain ATCC BAA-895 / CDC 4225-83 / SGSC4696) protein is 3-phosphoshikimate 1-carboxyvinyltransferase.